The primary structure comprises 249 residues: Octanoyltransferase (249 aa).

The region spanning 53-234 (PDTDDEIWVV…RLIAHLDGAT (182 aa)) is the BPL/LPL catalytic domain. Residues 93–100 (RGGQITYH), 165–167 (ALG), and 178–180 (GLS) each bind substrate. Cys196 (acyl-thioester intermediate) is an active-site residue.

The protein belongs to the LipB family.

It is found in the cytoplasm. The enzyme catalyses octanoyl-[ACP] + L-lysyl-[protein] = N(6)-octanoyl-L-lysyl-[protein] + holo-[ACP] + H(+). It participates in protein modification; protein lipoylation via endogenous pathway; protein N(6)-(lipoyl)lysine from octanoyl-[acyl-carrier-protein]: step 1/2. Functionally, catalyzes the transfer of endogenously produced octanoic acid from octanoyl-acyl-carrier-protein onto the lipoyl domains of lipoate-dependent enzymes. Lipoyl-ACP can also act as a substrate although octanoyl-ACP is likely to be the physiological substrate. The polypeptide is Octanoyltransferase (Burkholderia mallei (strain NCTC 10247)).